The primary structure comprises 520 residues: Legumin A2 (520 aa).

An N-terminal signal peptide occupies residues 1–22 (MATKLLALSLSFCFLLLGGCFA). 2 cysteine pairs are disulfide-bonded: C32–C65 and C108–C342. The 197-residue stretch at 37–233 (LNALEPDNRI…AFNVNRHIVD (197 aa)) folds into the Cupin type-1 1 domain. Residues 250-339 (VKGGLSIISP…RRQGDNGLEE (90 aa)) are disordered. Residues 348 to 497 (LNIGPSSSPD…TFNLQRNEAR (150 aa)) form the Cupin type-1 2 domain.

The protein belongs to the 11S seed storage protein (globulins) family. Hexamer; each subunit is composed of an acidic and a basic chain derived from a single precursor and linked by a disulfide bond.

This protein found in the seeds of many leguminous and non-leguminous plants is the source of sulfur-containing amino acids in seed meals. The sequence is that of Legumin A2 (LEGA2) from Pisum sativum (Garden pea).